The primary structure comprises 146 residues: Hemoglobin subunit beta-1 (146 aa).

Positions H2–H146 constitute a Globin domain. Residues H63 and H92 each coordinate heme b.

Belongs to the globin family. Heterotetramer of two alpha chains and two beta chains. Red blood cells.

In terms of biological role, involved in oxygen transport from the lung to the various peripheral tissues. This chain is Hemoglobin subunit beta-1 (HBB1), found in Iguana iguana (Common iguana).